The following is a 493-amino-acid chain: Lysine--tRNA ligase (493 aa).

E406 and E413 together coordinate Mg(2+).

The protein belongs to the class-II aminoacyl-tRNA synthetase family. As to quaternary structure, homodimer. Mg(2+) is required as a cofactor.

It is found in the cytoplasm. It catalyses the reaction tRNA(Lys) + L-lysine + ATP = L-lysyl-tRNA(Lys) + AMP + diphosphate. This is Lysine--tRNA ligase from Leuconostoc citreum (strain KM20).